A 124-amino-acid polypeptide reads, in one-letter code: Tax1-binding protein 3 homolog (124 aa).

The PDZ domain maps to Ala18–Ser106.

May regulate a number of protein-protein interactions by competing for PDZ domain binding sites. The sequence is that of Tax1-binding protein 3 homolog from Caenorhabditis elegans.